Consider the following 382-residue polypeptide: Na(+)/H(+) antiporter NhaA 2 (382 aa).

A run of 11 helical transmembrane segments spans residues 7–27 (MVLS…LALL), 58–78 (LDLW…GLEL), 94–114 (SLPI…FAAI), 124–144 (GWAI…MLLG), 153–173 (LFLL…IALF), 178–198 (LSAL…LLNY), 199–219 (YHIT…IAML), 255–275 (NPWV…GIDI), 291–311 (IILG…FIAI), 327–347 (FYGI…IDGL), and 361–381 (LAIL…LKIV).

Belongs to the NhaA Na(+)/H(+) (TC 2.A.33) antiporter family.

The protein localises to the cell inner membrane. It catalyses the reaction Na(+)(in) + 2 H(+)(out) = Na(+)(out) + 2 H(+)(in). In terms of biological role, na(+)/H(+) antiporter that extrudes sodium in exchange for external protons. The protein is Na(+)/H(+) antiporter NhaA 2 of Campylobacter jejuni subsp. jejuni serotype O:6 (strain 81116 / NCTC 11828).